We begin with the raw amino-acid sequence, 1215 residues long: MERIHVAVRARPLTAEDAGSSPWRVSGNAIALSTQPSIRFEFDRIFGEECRTADVYGARTKHIVDSAVRGFNGTVFAYGQTNSGKTYTMRGSGNEPGIIPLAVHDLFRTIEEHLDREFLLRMSYMEIYNEEINDLLVPEHRKLQIHESIERGIYVAGLREEIVTCPEQVLEFMSFGESHRHIGETNMNVYSSRSHTIFRMVIESREKVDESEAGESCDAVRVSVLNLVDLAGSERAAKTGAEGVRLKEGSHINKSLMTLGTVIKKLSEGIEGQGGHVPYRDSKLTRILQPALGGNANTAIICNITLAQVHADETKSSLQFASRALRVTNCACVNEILTDAALLKRQRKEIEELRAKLRNSQSEHWEEEILNLRNTLLQSELEKERISLELEEEKKAKEQRDKRLIEQAKKIENLSSLVLNSERDDRTTVSSKNKRRLTWCPGLLSRQFDGQVLESVQEDPPSSTVRHGRNMEMPLHFEELIQESCESSIKHYTDAYSSGSLSCEDDSLPDSHALLHVTSRRKPNTMKKSDQEQLMGLASERIIPQELNDWKYTTQSQENIKACVNGLSARESEAILVIKQLEDQIKLLELEKSSFQNNLDDVLELATQQKASFHEKYEELQQNALVAQEQAKIANEKLSKQEAAYEFLTGIFVETESIAVQMDQSTRSVDNALSFIEELFQNLFMMAKNFTEAKQFVCGDITQFSSVIRDYENISNCLREKLSKLEMEKKILDEQSLDQKDELQRLKSSLESCEKAMEDCNIQNELEKDSILSELLTLQKEVVYLSSSSLMKEKESIRKELDRTKTKLKETENKLKNSIQEKIKLESEKAEAQREIKKLQSQRTLLERDLRKRDSFTVDKRHEQSVKSKELAGIYDQAVQIQEDYGKLEMHAFDMEAEIASLQEALVTTIAEKEEALSRVELLTSAVEDLESRLNSAESETSSLLEETAVLTRKLDASESISKKLEASISSLSREKEDMGIELTDVLLEMESERSTWTAKEKAYLEAKQKLNICNKNNCKLSEDLIKVRQELACCREQYSILEAKMIFSKNDTNEEKYCRETFEESERLLKKERNIDTGVNENELHQQLLSITEERDKLLSEIKYMNSVINESELIQAKATIDELSSRISIVEAKMKNDASAYNKENTKLRMQIRWMQPELDAHRGRLKEAINEMKLMDTKYLEASTKLKKDLSFYCREVLRLKEQLKESQVKAS.

The region spanning 3-327 (RIHVAVRARP…LQFASRALRV (325 aa)) is the Kinesin motor domain. ATP is bound at residue 79–86 (GQTNSGKT). Coiled-coil stretches lie at residues 333-414 (VNEI…IENL), 571-646 (ESEA…AAYE), 708-855 (IRDY…KRDS), and 894-979 (DMEA…KEDM).

Belongs to the TRAFAC class myosin-kinesin ATPase superfamily. Kinesin family. KIN-7 subfamily.

The sequence is that of Kinesin-like protein KIN-7I from Oryza sativa subsp. japonica (Rice).